The sequence spans 77 residues: Translation initiation factor IF-1, chloroplastic (77 aa).

Residues 1–71 (MKEQKWVHEG…TRGRIIYRLR (71 aa)) form the S1-like domain.

Belongs to the IF-1 family. Component of the 30S ribosomal translation pre-initiation complex which assembles on the 30S ribosome in the order IF-2 and IF-3, IF-1 and N-formylmethionyl-tRNA(fMet); mRNA recruitment can occur at any time during PIC assembly.

It is found in the plastid. The protein resides in the chloroplast. Functionally, one of the essential components for the initiation of protein synthesis. Stabilizes the binding of IF-2 and IF-3 on the 30S subunit to which N-formylmethionyl-tRNA(fMet) subsequently binds. Helps modulate mRNA selection, yielding the 30S pre-initiation complex (PIC). Upon addition of the 50S ribosomal subunit IF-1, IF-2 and IF-3 are released leaving the mature 70S translation initiation complex. The polypeptide is Translation initiation factor IF-1, chloroplastic (Cercidiphyllum japonicum (Katsura tree)).